We begin with the raw amino-acid sequence, 208 residues long: LexA repressor (208 aa).

A DNA-binding region (H-T-H motif) is located at residues 29 to 49 (IREIGDSLNINSTSTVHNNIL). Residues S131 and K168 each act as for autocatalytic cleavage activity in the active site.

This sequence belongs to the peptidase S24 family. As to quaternary structure, homodimer.

It catalyses the reaction Hydrolysis of Ala-|-Gly bond in repressor LexA.. Represses a number of genes involved in the response to DNA damage (SOS response), including recA and lexA. In the presence of single-stranded DNA, RecA interacts with LexA causing an autocatalytic cleavage which disrupts the DNA-binding part of LexA, leading to derepression of the SOS regulon and eventually DNA repair. The polypeptide is LexA repressor (Finegoldia magna (strain ATCC 29328 / DSM 20472 / WAL 2508) (Peptostreptococcus magnus)).